A 92-amino-acid chain; its full sequence is Small ribosomal subunit protein uS19 (92 aa).

The protein belongs to the universal ribosomal protein uS19 family.

In terms of biological role, protein S19 forms a complex with S13 that binds strongly to the 16S ribosomal RNA. This chain is Small ribosomal subunit protein uS19, found in Rhodopseudomonas palustris (strain HaA2).